A 385-amino-acid chain; its full sequence is Probable peptidoglycan glycosyltransferase FtsW (385 aa).

Helical transmembrane passes span 18–38 (LLWT…SASL), 57–77 (IYLA…PLAL), 81–101 (LRFV…IPGL), 111–131 (WIAL…CFVL), 157–177 (LLGV…VVVL), 195–215 (FLLI…AEPY), 280–300 (LGLL…WRVF), 311–331 (LLYH…QAFI), and 347–367 (LPFI…VGLI).

This sequence belongs to the SEDS family. FtsW subfamily.

Its subcellular location is the cell inner membrane. It carries out the reaction [GlcNAc-(1-&gt;4)-Mur2Ac(oyl-L-Ala-gamma-D-Glu-L-Lys-D-Ala-D-Ala)](n)-di-trans,octa-cis-undecaprenyl diphosphate + beta-D-GlcNAc-(1-&gt;4)-Mur2Ac(oyl-L-Ala-gamma-D-Glu-L-Lys-D-Ala-D-Ala)-di-trans,octa-cis-undecaprenyl diphosphate = [GlcNAc-(1-&gt;4)-Mur2Ac(oyl-L-Ala-gamma-D-Glu-L-Lys-D-Ala-D-Ala)](n+1)-di-trans,octa-cis-undecaprenyl diphosphate + di-trans,octa-cis-undecaprenyl diphosphate + H(+). It participates in cell wall biogenesis; peptidoglycan biosynthesis. Functionally, peptidoglycan polymerase that is essential for cell division. This is Probable peptidoglycan glycosyltransferase FtsW from Alcanivorax borkumensis (strain ATCC 700651 / DSM 11573 / NCIMB 13689 / SK2).